A 187-amino-acid polypeptide reads, in one-letter code: Large ribosomal subunit protein bL32m (187 aa).

Positions 109, 112, 122, and 125 each coordinate Zn(2+).

It belongs to the bacterial ribosomal protein bL32 family. In terms of assembly, component of the mitochondrial ribosome large subunit (39S) which comprises a 16S rRNA and about 50 distinct proteins. Post-translationally, MRPL32 precursor is processed by the m-AAA protease (composed of AFG3L2 and SPG7), which cleaves the N-terminal transit peptide. Cleavage by the m-AAA protease takes place prior to assembly into the large subunit, an essential step for mitochondrial ribosome (mitoribosome) assembly. Proper processing by the m-AAA protease is dependent on the zinc-binding region within the tightly folded C-terminal domain of MRPL32: zinc-dependent folding halts degradation initiated from the N-terminus and triggers the release of mature MRPL32.

It localises to the mitochondrion. Functionally, component of the mitochondrial large ribosomal subunit (mt-LSU). The mitochondrial ribosome (mitoribosome) is a large ribonucleoprotein complex responsible for the synthesis of proteins inside mitochondria. This chain is Large ribosomal subunit protein bL32m (Mrpl32), found in Mus musculus (Mouse).